Reading from the N-terminus, the 146-residue chain is MKLHELRPAAGSKSAPKRVGRGTGSGLGRNAGKGEKGQNARSGGGVRPGFEGGQMPLYRRLPKRGFTNPFTKHFVTINVDRLNIFDNGTEVTPELLLERRVVSKLMDGVKILGNGNIEKSLTIAGCKLSKQAAEKIVAAGGKVEVK.

The disordered stretch occupies residues 1 to 54 (MKLHELRPAAGSKSAPKRVGRGTGSGLGRNAGKGEKGQNARSGGGVRPGFEGGQ). Composition is skewed to gly residues over residues 21–31 (RGTGSGLGRNA) and 42–52 (SGGGVRPGFEG).

It belongs to the universal ribosomal protein uL15 family. In terms of assembly, part of the 50S ribosomal subunit.

Binds to the 23S rRNA. The protein is Large ribosomal subunit protein uL15 of Clostridium perfringens (strain ATCC 13124 / DSM 756 / JCM 1290 / NCIMB 6125 / NCTC 8237 / Type A).